The sequence spans 121 residues: Small ribosomal subunit protein uS13 (121 aa).

The tract at residues P96 to K121 is disordered. Residues A106–K121 show a composition bias toward basic residues.

It belongs to the universal ribosomal protein uS13 family. As to quaternary structure, part of the 30S ribosomal subunit. Forms a loose heterodimer with protein S19. Forms two bridges to the 50S subunit in the 70S ribosome.

Its function is as follows. Located at the top of the head of the 30S subunit, it contacts several helices of the 16S rRNA. In the 70S ribosome it contacts the 23S rRNA (bridge B1a) and protein L5 of the 50S subunit (bridge B1b), connecting the 2 subunits; these bridges are implicated in subunit movement. Contacts the tRNAs in the A and P-sites. The polypeptide is Small ribosomal subunit protein uS13 (Streptococcus pneumoniae serotype 4 (strain ATCC BAA-334 / TIGR4)).